The following is a 310-amino-acid chain: ADP-L-glycero-D-manno-heptose-6-epimerase (310 aa).

NADP(+) contacts are provided by residues 10-11 (FI), 31-32 (DN), Lys38, Lys53, 75-79 (EGACS), and Asn92. Tyr140 serves as the catalytic Proton acceptor. Lys144 provides a ligand contact to NADP(+). Asn169 lines the substrate pocket. NADP(+) contacts are provided by Val170 and Lys178. Lys178 (proton acceptor) is an active-site residue. Residues Ser180, His187, 201–204 (FEGS), Arg209, and Tyr272 each bind substrate.

This sequence belongs to the NAD(P)-dependent epimerase/dehydratase family. HldD subfamily. As to quaternary structure, homopentamer. The cofactor is NADP(+).

It carries out the reaction ADP-D-glycero-beta-D-manno-heptose = ADP-L-glycero-beta-D-manno-heptose. The protein operates within nucleotide-sugar biosynthesis; ADP-L-glycero-beta-D-manno-heptose biosynthesis; ADP-L-glycero-beta-D-manno-heptose from D-glycero-beta-D-manno-heptose 7-phosphate: step 4/4. It participates in bacterial outer membrane biogenesis; LPS core biosynthesis. Functionally, catalyzes the interconversion between ADP-D-glycero-beta-D-manno-heptose and ADP-L-glycero-beta-D-manno-heptose via an epimerization at carbon 6 of the heptose. This chain is ADP-L-glycero-D-manno-heptose-6-epimerase, found in Klebsiella pneumoniae.